We begin with the raw amino-acid sequence, 315 residues long: Ribosomal RNA small subunit methyltransferase H (315 aa).

S-adenosyl-L-methionine is bound by residues 33–35 (GGH), Asp-52, Phe-84, Asp-106, and Gln-113.

Belongs to the methyltransferase superfamily. RsmH family.

It is found in the cytoplasm. The enzyme catalyses cytidine(1402) in 16S rRNA + S-adenosyl-L-methionine = N(4)-methylcytidine(1402) in 16S rRNA + S-adenosyl-L-homocysteine + H(+). Specifically methylates the N4 position of cytidine in position 1402 (C1402) of 16S rRNA. In Lactobacillus acidophilus (strain ATCC 700396 / NCK56 / N2 / NCFM), this protein is Ribosomal RNA small subunit methyltransferase H.